A 253-amino-acid chain; its full sequence is uncharacterized protein (253 aa).

6 helical membrane-spanning segments follow: residues 17–37 (MWLL…HIIA), 46–66 (IFGF…VFVF), 93–113 (LAAS…YGIW), 139–159 (MYGL…WTVF), 172–192 (AMVL…SPLV), and 222–242 (IHLS…LLIM).

It is found in the cell membrane. This is an uncharacterized protein from Bacillus subtilis (strain 168).